Consider the following 272-residue polypeptide: Serine/arginine-rich splicing factor 5 (272 aa).

Residues 4–74 (CRVFIGRLNP…ERVTIEHARA (71 aa)) enclose the RRM 1 domain. The interval 73 to 105 (RARSRGGRGRGRYSDRFSSRRPRNDRRNAPPVR) is disordered. Residues 74-83 (ARSRGGRGRG) show a composition bias toward basic residues. The residue at position 86 (Ser86) is a Phosphoserine. Residues 108-181 (NRLIVENLSS…RKIKLIEGSK (74 aa)) form the RRM 2 domain. Residue Lys167 is modified to N6-acetyllysine. The tract at residues 174–272 (IKLIEGSKRH…SRSRSVDSGN (99 aa)) is disordered. A compositionally biased stretch (basic residues) spans 182–229 (RHSRSRSRSRSRTRSSSRSRSRSRSRSRKSYSRSRSRSRSRSRSKSRS). A phosphoserine mark is found at Ser227, Ser229, Ser233, Ser250, and Ser253. The span at 242–254 (RGSSSRSKSPASV) shows a compositional bias: low complexity.

It belongs to the splicing factor SR family. Interacts (via RS domain) with PHF5A (via N-terminus). Found in a pre-mRNA splicing complex with SRSF4/SFRS4, SRSF5/SFRS5, SNRNP70, SNRPA1, SRRM1 and SRRM2. In terms of processing, extensively phosphorylated on serine residues in the RS domain.

The protein localises to the nucleus. In terms of biological role, plays a role in constitutive splicing and can modulate the selection of alternative splice sites. This is Serine/arginine-rich splicing factor 5 (SRSF5) from Homo sapiens (Human).